A 587-amino-acid polypeptide reads, in one-letter code: Lipoprotein LpqB (587 aa).

The N-terminal stretch at 1–19 (MERLMRLTILLFLGAVLAG) is a signal peptide. The N-palmitoyl cysteine moiety is linked to residue Cys20. Cys20 carries the S-diacylglycerol cysteine lipid modification.

The protein belongs to the LpqB lipoprotein family.

It is found in the cell membrane. The protein is Lipoprotein LpqB of Mycobacterium bovis (strain ATCC BAA-935 / AF2122/97).